A 647-amino-acid chain; its full sequence is Pre-mRNA-splicing factor SLU7 (647 aa).

Residues methionine 1–asparagine 19 are compositionally biased toward polar residues. Residues methionine 1–alanine 44 are disordered. Residues alanine 21–alanine 41 show a composition bias toward basic and acidic residues. A CCHC-type zinc finger spans residues glycine 113–aspartate 130. Disordered regions lie at residues histidine 193–aspartate 212 and glutamate 465–glutamate 620. Over residues glutamate 465–glutamate 479 the composition is skewed to basic and acidic residues. Acidic residues predominate over residues valine 480–glutamate 491. Residues glutamate 513 to arginine 533 are compositionally biased toward basic and acidic residues. Residues arginine 534 to histidine 555 show a composition bias toward basic residues. A compositionally biased stretch (basic and acidic residues) spans glutamate 588 to asparagine 606.

The protein belongs to the SLU7 family.

The protein localises to the nucleus. In terms of biological role, participates in the second catalytic step of pre-mRNA splicing, when the free hydroxyl group of exon I attacks the 3'-splice site to generate spliced mRNA and the excised lariat intron. The protein is Pre-mRNA-splicing factor SLU7 of Caenorhabditis elegans.